A 222-amino-acid polypeptide reads, in one-letter code: uncharacterized protein (222 aa).

A helical transmembrane segment spans residues 7–26; the sequence is ICLVSLICISGIYFGYQYYQ. Residues 139–222 enclose the SPOR domain; that stretch reads CRSNAGYKVQ…AYNKQSCVLK (84 aa).

It localises to the membrane. This is an uncharacterized protein from Rickettsia prowazekii (strain Madrid E).